A 373-amino-acid polypeptide reads, in one-letter code: Arfaptin-1 (373 aa).

The interval methionine 1–glutamine 47 is disordered. Alanine 2 carries the N-acetylalanine modification. Serine 5 is modified (phosphoserine). Basic and acidic residues predominate over residues aspartate 22 to histidine 35. Serine 36, serine 39, serine 69, serine 79, and serine 132 each carry phosphoserine. Residues threonine 153–lysine 353 form the AH domain. Position 361 is a phosphothreonine (threonine 361).

As to quaternary structure, forms homodimers or heterodimers with ARFIP2. Interacts with non-myristoylated GTP-bound ARF3, but not to GDP-bound ARF3. Interacts with ARF1. Binds with lower affinity to ARF5 and with very little affinity to ARF6. Interacts with ARL1. Interacts with ATG9A. In terms of processing, phosphorylated by PRKD1; phosphorylation delocalizes ARFIP1 from the Golgi and disrupts its ability to inhibit the activity of ADP-ribosylation factor, an important component of the vesicle scission machinery.

The protein localises to the golgi apparatus. The protein resides in the trans-Golgi network membrane. Plays a role in controlling biogenesis of secretory granules at the trans-Golgi network. Mechanistically, binds ARF-GTP at the neck of a growing secretory granule precursor and forms a protective scaffold. Once the granule precursor has been completely loaded, active PRKD1 phosphorylates ARFIP1 and releases it from ARFs. In turn, ARFs induce fission. Through this mechanism, ensures proper secretory granule formation at the Golgi of pancreatic beta cells. This Mus musculus (Mouse) protein is Arfaptin-1.